We begin with the raw amino-acid sequence, 685 residues long: Sulfite reductase [ferredoxin], chloroplastic (685 aa).

Residues 1–51 constitute a chloroplast transit peptide; that stretch reads MTTSFAAAALRDPKLQIPNYHGLRSSSAASSLSRNALSVPSSTRSSSLIRA. [4Fe-4S] cluster is bound by residues C495, C501, C541, and C545. C545 lines the siroheme pocket.

This sequence belongs to the nitrite and sulfite reductase 4Fe-4S domain family. As to quaternary structure, monomer. Interacts with ferredoxin. Siroheme is required as a cofactor. [4Fe-4S] cluster serves as cofactor. Phosphorylated; this phosphorylation reduces DNA-binding. Expressed in leaves, stems, and roots.

Its subcellular location is the plastid. It localises to the chloroplast stroma. The protein resides in the chloroplast nucleoid. The protein localises to the plastid stroma. It carries out the reaction hydrogen sulfide + 6 oxidized [2Fe-2S]-[ferredoxin] + 3 H2O = sulfite + 6 reduced [2Fe-2S]-[ferredoxin] + 7 H(+). In terms of biological role, essential protein with sulfite reductase activity required in assimilatory sulfate reduction pathway during both primary and secondary metabolism and thus involved in development and growth. Functionally, DNA-binding protein that binds to both double-stranded and single-stranded DNA without significant sequence specificity to reversibly repress the transcriptional activity of chloroplast nucleoids by promoting DNA compaction and possibly regulate DNA replication. The protein is Sulfite reductase [ferredoxin], chloroplastic (SIR) of Pisum sativum (Garden pea).